The sequence spans 509 residues: Scavenger receptor class B member 1 (509 aa).

Topologically, residues 1–11 (MGSRSRARQVA) are cytoplasmic. A helical transmembrane segment spans residues 12-32 (AALGFVGLLLAALGAVMIVMV). Residues 33-439 (PSIIKQQVLK…FYTQLVLMPK (407 aa)) lie on the Extracellular side of the membrane. Residues asparagine 102, asparagine 108, asparagine 173, asparagine 212, asparagine 255, asparagine 310, asparagine 330, and asparagine 383 are each glycosylated (N-linked (GlcNAc...) asparagine). Cysteine 251 and cysteine 384 are oxidised to a cystine. Residues 440 to 460 (VLHYAQYVLLALGCVLLFIPI) form a helical membrane-spanning segment. The Cytoplasmic portion of the chain corresponds to 461 to 509 (VYQIRSQEKCYLFWSSSKKGSKDKEAIQAYSESLMTPAPKGTVLQEARL).

It belongs to the CD36 family. The C-terminal region binds to PDZK1. Post-translationally, N-glycosylated. In terms of processing, the six cysteines of the extracellular domain are all involved in intramolecular disulfide bonds.

It localises to the cell membrane. The protein localises to the membrane. It is found in the caveola. Receptor for different ligands such as phospholipids, cholesterol ester, lipoproteins, phosphatidylserine and apoptotic cells. Receptor for HDL, mediating selective uptake of cholesteryl ether and HDL-dependent cholesterol efflux. Also facilitates the flux of free and esterified cholesterol between the cell surface and apoB-containing lipoproteins and modified lipoproteins, although less efficiently than HDL. May be involved in the phagocytosis of apoptotic cells, via its phosphatidylserine binding activity. In Sus scrofa (Pig), this protein is Scavenger receptor class B member 1 (SCARB1).